The primary structure comprises 930 residues: SCY1-like protein 2 (930 aa).

A Protein kinase domain is found at 32–327 (FDVGRHIASG…ADQMTKIPFF (296 aa)). An HEAT repeat occupies 443–479 (DEIKNSVLPMVYRALEAPSIQIQELCLNIIPTFANLI). Phosphoserine is present on residues Ser658 and Ser677. Positions 658–706 (SGSESENREDGMQGKQKRGSLTLEEKQKLAKEQEQAQKLKSQQPLKPQV) are disordered. A compositionally biased stretch (basic and acidic residues) spans 680–694 (LEEKQKLAKEQEQAQ). The span at 695–705 (KLKSQQPLKPQ) shows a compositional bias: low complexity. Position 708 is a phosphothreonine (Thr708). The interval 895 to 930 (GMQGNPFFNPQNFAQPPPTTMTSSSSASNDLKDLFG) is disordered. Residues 897–922 (QGNPFFNPQNFAQPPPTTMTSSSSAS) are compositionally biased toward low complexity.

Belongs to the protein kinase superfamily. In terms of assembly, interacts with clathrin and AP2B1; the interaction mediates the association with the AP-2 complex. Post-translationally, could autophosphorylate in presence of poly-L-lysine. As to expression, ubiquitously expressed.

It is found in the cytoplasmic vesicle. The protein localises to the clathrin-coated vesicle. The protein resides in the golgi apparatus. It localises to the trans-Golgi network membrane. Its subcellular location is the endosome membrane. Its function is as follows. Component of the AP2-containing clathrin coat that may regulate clathrin-dependent trafficking at plasma membrane, TGN and endosomal system. A possible serine/threonine-protein kinase toward the beta2-subunit of the plasma membrane adapter complex AP2 and other proteins in presence of poly-L-lysine has not been confirmed. By regulating the expression of excitatory receptors at synapses, plays an essential role in neuronal function and signaling and in brain development. This chain is SCY1-like protein 2, found in Mus musculus (Mouse).